We begin with the raw amino-acid sequence, 219 residues long: Putative GEM-like protein 8 (219 aa).

Residues 96-174 (KIYKRLFKVS…CKINGVNQSQ (79 aa)) form the GRAM domain.

The protein belongs to the GEM family.

The protein is Putative GEM-like protein 8 of Arabidopsis thaliana (Mouse-ear cress).